Here is a 98-residue protein sequence, read N- to C-terminus: Large ribosomal subunit protein uL23 (98 aa).

It belongs to the universal ribosomal protein uL23 family. Part of the 50S ribosomal subunit. Contacts protein L29, and trigger factor when it is bound to the ribosome.

Functionally, one of the early assembly proteins it binds 23S rRNA. One of the proteins that surrounds the polypeptide exit tunnel on the outside of the ribosome. Forms the main docking site for trigger factor binding to the ribosome. The protein is Large ribosomal subunit protein uL23 of Rickettsia peacockii (strain Rustic).